The sequence spans 424 residues: Double homeobox protein 4-like protein 2 (424 aa).

The segment covering 1–10 (MALPTPSDST) has biased composition (polar residues). 5 disordered regions span residues 1-24 (MALP…RRRL), 72-102 (SRQL…TAVT), 148-167 (RHPG…CSAA), 218-362 (LQPS…LQEP), and 388-414 (QPLL…PLSE). DNA-binding regions (homeobox) lie at residues 19–78 (GRRR…LRQH) and 94–153 (GRRK…PGQG). Over residues 265–274 (KSREDRDPQR) the composition is skewed to basic and acidic residues. Low complexity-rich tracts occupy residues 278-302 (PGPC…LAPP) and 319-329 (AGAAWEPQAGA).

The protein resides in the nucleus. May be involved in transcriptional regulation. This Homo sapiens (Human) protein is Double homeobox protein 4-like protein 2 (DUX4L2).